Reading from the N-terminus, the 214-residue chain is Pyridoxine/pyridoxamine 5'-phosphate oxidase (214 aa).

Substrate contacts are provided by residues R8–Y11 and K67. FMN is bound by residues R62 to K67, Y77 to T78, K84, and Q106. Residues Y124, R128, and S132 each contribute to the substrate site. FMN contacts are provided by residues Q141–S142 and W186. R192–H194 is a substrate binding site. R196 lines the FMN pocket.

The protein belongs to the pyridoxamine 5'-phosphate oxidase family. Homodimer. It depends on FMN as a cofactor.

The catalysed reaction is pyridoxamine 5'-phosphate + O2 + H2O = pyridoxal 5'-phosphate + H2O2 + NH4(+). It catalyses the reaction pyridoxine 5'-phosphate + O2 = pyridoxal 5'-phosphate + H2O2. It functions in the pathway cofactor metabolism; pyridoxal 5'-phosphate salvage; pyridoxal 5'-phosphate from pyridoxamine 5'-phosphate: step 1/1. Its pathway is cofactor metabolism; pyridoxal 5'-phosphate salvage; pyridoxal 5'-phosphate from pyridoxine 5'-phosphate: step 1/1. In terms of biological role, catalyzes the oxidation of either pyridoxine 5'-phosphate (PNP) or pyridoxamine 5'-phosphate (PMP) into pyridoxal 5'-phosphate (PLP). This chain is Pyridoxine/pyridoxamine 5'-phosphate oxidase, found in Flavobacterium psychrophilum (strain ATCC 49511 / DSM 21280 / CIP 103535 / JIP02/86).